The primary structure comprises 386 residues: S-adenosylmethionine synthase (386 aa).

Position 16 (histidine 16) interacts with ATP. Residue aspartate 18 coordinates Mg(2+). Glutamate 44 is a K(+) binding site. L-methionine-binding residues include glutamate 57 and glutamine 100. Residues 100–110 form a flexible loop region; the sequence is QSPDINQGVDR. ATP-binding positions include 164-166, 230-231, aspartate 239, 245-246, alanine 262, and lysine 266; these read DGK, KF, and RK. Aspartate 239 contributes to the L-methionine binding site. L-methionine is bound at residue lysine 270.

This sequence belongs to the AdoMet synthase family. In terms of assembly, homotetramer; dimer of dimers. Requires Mg(2+) as cofactor. It depends on K(+) as a cofactor.

The protein resides in the cytoplasm. The catalysed reaction is L-methionine + ATP + H2O = S-adenosyl-L-methionine + phosphate + diphosphate. Its pathway is amino-acid biosynthesis; S-adenosyl-L-methionine biosynthesis; S-adenosyl-L-methionine from L-methionine: step 1/1. In terms of biological role, catalyzes the formation of S-adenosylmethionine (AdoMet) from methionine and ATP. The overall synthetic reaction is composed of two sequential steps, AdoMet formation and the subsequent tripolyphosphate hydrolysis which occurs prior to release of AdoMet from the enzyme. The chain is S-adenosylmethionine synthase from Helicobacter hepaticus (strain ATCC 51449 / 3B1).